Here is a 316-residue protein sequence, read N- to C-terminus: MLRGWGGPSVGVCVRTALGVLCLCLTGAVEVQVSEDPVVALVDTDATLRCSFSPEPGFSLAQLNLIWQLTDTKQLVHSFTEGRDQGSAYSNRTALFPDLLVQGNASLRLQRVRVTDEGSYTCFVSIQDFDSAAVSLQVAAPYSKPSMTLEPNKDLRPGNMVTITCSSYQGYPEAEVFWKDGQGVPLTGNVTTSQMANERGLFDVHSVLRVVLGANGTYSCLVRNPVLQQDAHGSVTITGQPLTFPPEALWVTVGLSVCLVVLLVALAFVCWRKIKQSCEEENAGAEDQDGDGEGSKTALRPLKPSENKEDDGQEIA.

The N-terminal stretch at 1–28 (MLRGWGGPSVGVCVRTALGVLCLCLTGA) is a signal peptide. The 111-residue stretch at 29–139 (VEVQVSEDPV…DSAAVSLQVA (111 aa)) folds into the Ig-like V-type domain. Over 29 to 248 (VEVQVSEDPV…GQPLTFPPEA (220 aa)) the chain is Extracellular. N-linked (GlcNAc...) asparagine glycosylation is found at N104, N189, and N215. The Ig-like C2-type domain occupies 145 to 238 (PSMTLEPNKD…QDAHGSVTIT (94 aa)). A disulfide bond links C165 and C220. The helical transmembrane segment at 249-269 (LWVTVGLSVCLVVLLVALAFV) threads the bilayer. Residues 270-316 (CWRKIKQSCEEENAGAEDQDGDGEGSKTALRPLKPSENKEDDGQEIA) are Cytoplasmic-facing. The segment covering 280–292 (EENAGAEDQDGDG) has biased composition (acidic residues). Positions 280–316 (EENAGAEDQDGDGEGSKTALRPLKPSENKEDDGQEIA) are disordered.

It belongs to the immunoglobulin superfamily. BTN/MOG family. Interacts with TREML2 and this interaction enhances T-cell activation. In terms of tissue distribution, ubiquitous.

The protein resides in the membrane. In terms of biological role, modulates T-cell-mediated immune responses and the development of acute and chronic transplant rejection. Plays a positive regulatory role in bone formation and has a dual role in the bone-immune interface. Induces antitumor immunity as it activates both acquired and innate immunity leading to natural killer cell and CD8 T-cell dependent killing of tumor cells. The protein is CD276 antigen (Cd276) of Mus musculus (Mouse).